Reading from the N-terminus, the 278-residue chain is Probable CCR4-associated factor 1 homolog 5 (278 aa).

4 residues coordinate a divalent metal cation: aspartate 30, glutamate 32, aspartate 145, and aspartate 217.

The protein belongs to the CAF1 family. Component of the CCR4-NOT complex, at least composed of CRR4 and CAF1 proteins. Requires a divalent metal cation as cofactor.

It localises to the nucleus. Its subcellular location is the cytoplasm. The enzyme catalyses Exonucleolytic cleavage of poly(A) to 5'-AMP.. In terms of biological role, ubiquitous transcription factor required for a diverse set of processes. It is a component of the CCR4 complex involved in the control of gene expression. This chain is Probable CCR4-associated factor 1 homolog 5 (CAF1-5), found in Arabidopsis thaliana (Mouse-ear cress).